The sequence spans 299 residues: DNA-binding transcriptional repressor CapW (299 aa).

Residues methionine 1–glutamate 84 are winged HTH domain. Positions alanine 85–valine 196 are WYL domain. A WYL domain is found at serine 120 to lysine 200. Positions tyrosine 145 to arginine 189 are probable ligand-binding region. Positions phenylalanine 197–arginine 299 are WCX domain.

As to quaternary structure, homodimer.

In terms of biological role, transcriptional regulator of a CBASS antivirus system. CBASS (cyclic oligonucleotide-based antiphage signaling system) provides immunity against bacteriophage. The CD-NTase protein synthesizes cyclic nucleotides in response to infection; these serve as specific second messenger signals. The signals activate a diverse range of effectors, leading to bacterial cell death and thus abortive phage infection. A type III CBASS system, part of a CapW-Cap6-Cap8-Cap7-CdnC-NucC locus. Binds specifically to palindromes that overlap the -10 site in the promoter of cap6, found beween found between the genes for divergently transcribed capW and cap6 (cognate DNA). Probably represses transcription bidirectionally from the promoter. Mutations that make it a constitutive repressor in E.coli do not change DNA-binding affinity. The chain is DNA-binding transcriptional repressor CapW from Stenotrophomonas maltophilia (Pseudomonas maltophilia).